The sequence spans 96 residues: Transcription and mRNA export factor SUS1 (96 aa).

Belongs to the ENY2 family. In terms of assembly, component of the nuclear pore complex (NPC)-associated TREX-2 complex (transcription and export complex 2), composed of at least SUS1, SAC3, THP1, SEM1, and CDC31. TREX-2 contains 2 SUS1 chains. The TREX-2 complex interacts with the nucleoporin NUP1. Component of the 1.8 MDa SAGA transcription coactivator-HAT complex. SAGA is built of 5 distinct domains with specialized functions. Within the SAGA complex, SUS1, SGF11, SGF73 and UBP8 form an additional subcomplex of SAGA called the DUB module (deubiquitination module). Interacts directly with THP1, SAC3, SGF11, and with the RNA polymerase II.

Its subcellular location is the nucleus. The protein resides in the nucleoplasm. It localises to the cytoplasm. It is found in the P-body. Functionally, involved in mRNA export coupled transcription activation by association with both the TREX-2 and the SAGA complexes. At the promoters, SAGA is required for recruitment of the basal transcription machinery. It influences RNA polymerase II transcriptional activity through different activities such as TBP interaction and promoter selectivity, interaction with transcription activators, and chromatin modification through histone acetylation and deubiquitination. Within the SAGA complex, participates in a subcomplex required for deubiquitination of H2B and for the maintenance of steady-state H3 methylation levels. The TREX-2 complex functions in docking export-competent ribonucleoprotein particles (mRNPs) to the nuclear entrance of the nuclear pore complex (nuclear basket). TREX-2 participates in mRNA export and accurate chromatin positioning in the nucleus by tethering genes to the nuclear periphery. May also be involved in cytoplasmic mRNA decay by interaction with components of P-bodies. The sequence is that of Transcription and mRNA export factor SUS1 from Kluyveromyces lactis (strain ATCC 8585 / CBS 2359 / DSM 70799 / NBRC 1267 / NRRL Y-1140 / WM37) (Yeast).